Here is a 231-residue protein sequence, read N- to C-terminus: Large ribosomal subunit protein uL1 (231 aa).

The protein belongs to the universal ribosomal protein uL1 family. In terms of assembly, part of the 50S ribosomal subunit.

Functionally, binds directly to 23S rRNA. The L1 stalk is quite mobile in the ribosome, and is involved in E site tRNA release. In terms of biological role, protein L1 is also a translational repressor protein, it controls the translation of the L11 operon by binding to its mRNA. The sequence is that of Large ribosomal subunit protein uL1 from Moorella thermoacetica (strain ATCC 39073 / JCM 9320).